A 199-amino-acid chain; its full sequence is Insertion sequence IS21-like putative ATP-binding protein (199 aa).

Residue 114-121 coordinates ATP; that stretch reads GDSGTGKT.

The protein belongs to the IS21/IS1162 putative ATP-binding protein family.

This Bacteroides fragilis (strain YCH46) protein is Insertion sequence IS21-like putative ATP-binding protein (tnpB).